The following is a 341-amino-acid chain: DnaJ homolog subfamily C member 22 (341 aa).

Residues Lys3 to Trp50 form the TM2 domain. 7 helical membrane-spanning segments follow: residues Leu5–Leu25, His30–Trp50, Phe81–Ser101, Phe105–Gly125, Leu135–Ile155, Leu185–Ala205, and Phe218–Leu238. The J domain occupies Leu277–Arg341.

It localises to the membrane. Functionally, may function as a co-chaperone. The chain is DnaJ homolog subfamily C member 22 (DNAJC22) from Pongo abelii (Sumatran orangutan).